Consider the following 353-residue polypeptide: UPF0283 membrane protein YcjF (353 aa).

A run of 3 helical transmembrane segments spans residues 70–90 (MVMG…VQWT), 100–120 (VALG…GSVV), and 213–233 (ESTL…FIAW).

The protein belongs to the UPF0283 family.

The protein localises to the cell inner membrane. This chain is UPF0283 membrane protein YcjF, found in Shigella boydii serotype 4 (strain Sb227).